The chain runs to 1399 residues: DNA-directed RNA polymerase subunit beta' (1399 aa).

4 residues coordinate Zn(2+): Cys-70, Cys-72, Cys-85, and Cys-88. Residues Asp-460, Asp-462, and Asp-464 each contribute to the Mg(2+) site. Zn(2+)-binding residues include Cys-814, Cys-888, Cys-895, and Cys-898.

This sequence belongs to the RNA polymerase beta' chain family. The RNAP catalytic core consists of 2 alpha, 1 beta, 1 beta' and 1 omega subunit. When a sigma factor is associated with the core the holoenzyme is formed, which can initiate transcription. It depends on Mg(2+) as a cofactor. Requires Zn(2+) as cofactor.

The enzyme catalyses RNA(n) + a ribonucleoside 5'-triphosphate = RNA(n+1) + diphosphate. Its function is as follows. DNA-dependent RNA polymerase catalyzes the transcription of DNA into RNA using the four ribonucleoside triphosphates as substrates. This Pseudomonas savastanoi pv. phaseolicola (strain 1448A / Race 6) (Pseudomonas syringae pv. phaseolicola (strain 1448A / Race 6)) protein is DNA-directed RNA polymerase subunit beta'.